Consider the following 206-residue polypeptide: Ribosomal RNA small subunit methyltransferase G (206 aa).

S-adenosyl-L-methionine is bound by residues Gly-73, Leu-78, 124-125 (VE), and Arg-139.

It belongs to the methyltransferase superfamily. RNA methyltransferase RsmG family.

Its subcellular location is the cytoplasm. It carries out the reaction guanosine(527) in 16S rRNA + S-adenosyl-L-methionine = N(7)-methylguanosine(527) in 16S rRNA + S-adenosyl-L-homocysteine. Its function is as follows. Specifically methylates the N7 position of guanine in position 527 of 16S rRNA. This chain is Ribosomal RNA small subunit methyltransferase G, found in Photorhabdus laumondii subsp. laumondii (strain DSM 15139 / CIP 105565 / TT01) (Photorhabdus luminescens subsp. laumondii).